The following is a 421-amino-acid chain: Testin (421 aa).

Residues 92-199 (MILTNPVAAK…GDVKLPYEMG (108 aa)) enclose the PET domain. Residues 133–164 (EKQPVAGSEGAQYRKKQLAKQLPAHDQDPSKC) form a disordered region. Residues 155–164 (PAHDQDPSKC) show a composition bias toward basic and acidic residues. 3 consecutive LIM zinc-binding domains span residues 234-297 (YFCY…CDSE), 299-359 (PRCA…NHAV), and 362-421 (QGCH…KMMS).

It belongs to the prickle / espinas / testin family. As to quaternary structure, interacts via LIM domain 1 with ZYX. Interacts (via LIM domain 3) with ENAH and VASP. Interacts with ALKBH4, talin, actin, alpha-actinin, GRIP1 and PXN. Interacts (via LIM domain 2) with ACTL7A (via N-terminus). Heterodimer with ACTL7A; the heterodimer interacts with ENAH to form a heterotrimer.

It is found in the cytoplasm. The protein resides in the cell junction. It localises to the focal adhesion. Scaffold protein that may play a role in cell adhesion, cell spreading and in the reorganization of the actin cytoskeleton. Plays a role in the regulation of cell proliferation. May act as a tumor suppressor. This chain is Testin (TES), found in Oryctolagus cuniculus (Rabbit).